A 300-amino-acid polypeptide reads, in one-letter code: 4-diphosphocytidyl-2-C-methyl-D-erythritol kinase (300 aa).

Residue lysine 17 is part of the active site. 102 to 112 contacts ATP; sequence PVAAGIGGGSA. Aspartate 144 is an active-site residue.

This sequence belongs to the GHMP kinase family. IspE subfamily.

The enzyme catalyses 4-CDP-2-C-methyl-D-erythritol + ATP = 4-CDP-2-C-methyl-D-erythritol 2-phosphate + ADP + H(+). It participates in isoprenoid biosynthesis; isopentenyl diphosphate biosynthesis via DXP pathway; isopentenyl diphosphate from 1-deoxy-D-xylulose 5-phosphate: step 3/6. Functionally, catalyzes the phosphorylation of the position 2 hydroxy group of 4-diphosphocytidyl-2C-methyl-D-erythritol. The protein is 4-diphosphocytidyl-2-C-methyl-D-erythritol kinase of Bradyrhizobium sp. (strain ORS 278).